The sequence spans 273 residues: Mediator of RNA polymerase II transcription subunit 18 (273 aa).

The segment covering 90–106 (GAQSSAASSGDPDAPMS) has biased composition (low complexity). Residues 90–114 (GAQSSAASSGDPDAPMSGTDTGTNF) are disordered.

This sequence belongs to the Mediator complex subunit 18 family. In terms of assembly, component of the Mediator complex.

It is found in the nucleus. Functionally, component of the Mediator complex, a coactivator involved in the regulated transcription of nearly all RNA polymerase II-dependent genes. Mediator functions as a bridge to convey information from gene-specific regulatory proteins to the basal RNA polymerase II transcription machinery. Mediator is recruited to promoters by direct interactions with regulatory proteins and serves as a scaffold for the assembly of a functional preinitiation complex with RNA polymerase II and the general transcription factors. This Aspergillus oryzae (strain ATCC 42149 / RIB 40) (Yellow koji mold) protein is Mediator of RNA polymerase II transcription subunit 18 (srb5).